The primary structure comprises 382 residues: Non-structural maintenance of chromosomes element 4 homolog A (382 aa).

Basic and acidic residues predominate over residues 1-21 (MSGDSSGRRPEGRGRGRDPHR). Residues 1-80 (MSGDSSGRRP…ASLEEETDPS (80 aa)) are disordered. Over residues 31-41 (RSPLSPGSRRG) the composition is skewed to low complexity. The segment covering 42 to 55 (AAPERREAPERPGL) has biased composition (basic and acidic residues). Over residues 56–78 (EDTEPSDSGDEMIDPASLEEETD) the composition is skewed to acidic residues. Thr-342 carries the phosphothreonine modification. Ser-374 is modified (phosphoserine).

It belongs to the NSE4 family. Component of the SMC5-SMC6 complex which consists at least of SMC5, SMC6, NSMCE2, NSMCE1, NSMCE4A or EID3 and NSMCE3. NSMCE1, NSMCE4A or EID3 and NSMCE3 probably form a subcomplex that bridges the head domains of the SMC5:SMC6 heterodimer. Interacts with NSMCE3.

Its subcellular location is the nucleus. The protein resides in the chromosome. It localises to the telomere. Its function is as follows. Component of the SMC5-SMC6 complex, a complex involved in repair of DNA double-strand breaks by homologous recombination. The complex may promote sister chromatid homologous recombination by recruiting the SMC1-SMC3 cohesin complex to double-strand breaks. The complex is required for telomere maintenance via recombination and mediates sumoylation of shelterin complex (telosome) components. The chain is Non-structural maintenance of chromosomes element 4 homolog A (NSMCE4A) from Bos taurus (Bovine).